The sequence spans 89 residues: MSLNAEQTATILAEFGRSEGDTGSTEVQVALLTAQINHLQGHFKEHKHDHHSRRGLLRMVNTRRKLLAYLKRTENVRYQELIKKLGLRR.

It belongs to the universal ribosomal protein uS15 family. Part of the 30S ribosomal subunit. Forms a bridge to the 50S subunit in the 70S ribosome, contacting the 23S rRNA.

Its function is as follows. One of the primary rRNA binding proteins, it binds directly to 16S rRNA where it helps nucleate assembly of the platform of the 30S subunit by binding and bridging several RNA helices of the 16S rRNA. Functionally, forms an intersubunit bridge (bridge B4) with the 23S rRNA of the 50S subunit in the ribosome. This Shewanella sediminis (strain HAW-EB3) protein is Small ribosomal subunit protein uS15.